Consider the following 1059-residue polypeptide: Transmembrane protease serine 9 (1059 aa).

At 1 to 29 the chain is on the cytoplasmic side; that stretch reads MEPTVADVHLVPRTTKEVPALDAACCRAA. A helical; Signal-anchor for type II membrane protein membrane pass occupies residues 30 to 50; that stretch reads SIGVVATSLVVLTLGVLLAFL. The Extracellular portion of the chain corresponds to 51-1059; sequence STQGFHVDHT…RGWIGQHIQE (1009 aa). An LDL-receptor class A domain is found at 153–190; it reads RCPGNSFSCGNSQCVTKVNPECDDQEDCSDGSDEAHCE. Cystine bridges form between C154/C166, C161/C180, C174/C189, and C228/C244. One can recognise a Peptidase S1 1 domain in the interval 203–436; that stretch reads IVGGMEASPG…LRDWILEATT (234 aa). Residues H243 and D292 each act as charge relay system in the active site. 3 disulfides stabilise this stretch: C326/C393, C358/C372, and C383/C412. S387 functions as the Charge relay system in the catalytic mechanism. Residues 443 to 469 form a disordered region; the sequence is APTMAPAPAAPSTAWPTSPESPVVSTP. The 233-residue stretch at 504–736 folds into the Peptidase S1 2 domain; sequence VVGGFGAASG…LKGWILEIMS (233 aa). An intrachain disulfide couples C529 to C545. The Charge relay system role is filled by H544. An N-linked (GlcNAc...) asparagine glycan is attached at N547. D592 (charge relay system) is an active-site residue. 3 disulfide bridges follow: C626–C693, C658–C672, and C683–C712. N-linked (GlcNAc...) asparagine glycosylation is found at N638 and N663. Residue S687 is the Charge relay system of the active site. Residues 758 to 814 are disordered; the sequence is TTAGLTVPGATPSRPTPGAASRVTGQPANSTLSAVSTTARGQTPFPDAPEATTHTQL. A compositionally biased stretch (polar residues) spans 780-798; that stretch reads VTGQPANSTLSAVSTTARG. N786 carries N-linked (GlcNAc...) asparagine glycosylation. The Peptidase S1 3 domain maps to 827-1058; it reads IVGGSAAGRG…VRGWIGQHIQ (232 aa). 4 disulfide bridges follow: C853–C869, C949–C1015, C980–C994, and C1005–C1034.

Belongs to the peptidase S1 family. Post-translationally, proteolytically cleaved to generate 3 independent serine protease chains. The cleaved chains may remain attached to the membrane thanks to disulfide bonds. It is unclear whether cleavage always takes place. As to expression, expressed in fetal human tissues, such as kidney, liver, lung and brain, and in a variety of tumor cell lines. Weakly expressed in adult tissues including skeletal muscle, liver, placenta and heart.

It is found in the cell membrane. Inhibited by serine protease inhibitors PMSF and 4-(2-aminoethyl)benzenesulfonyl fluoride, but not by EDTA. In terms of biological role, serase-1 and serase-2 are serine proteases that hydrolyze the peptides N-t-Boc-Gln-Ala-Arg-AMC and N-t-Boc-Gln-Gly-Arg-AMC. In contrast, N-t-Boc-Ala-Phe-Lys-AMC and N-t-Boc-Ala-Pro-Ala-AMC are not significantly hydrolyzed. This chain is Transmembrane protease serine 9 (TMPRSS9), found in Homo sapiens (Human).